The primary structure comprises 288 residues: DegV domain-containing protein MYPU_3590 (288 aa).

The region spanning 3-275 (IAIVIDSSSG…LGAIAISLVK (273 aa)) is the DegV domain. Positions 61 and 92 each coordinate hexadecanoate.

Its function is as follows. May bind long-chain fatty acids, such as palmitate, and may play a role in lipid transport or fatty acid metabolism. This is DegV domain-containing protein MYPU_3590 from Mycoplasmopsis pulmonis (strain UAB CTIP) (Mycoplasma pulmonis).